The primary structure comprises 353 residues: Photosystem II protein D1 (353 aa).

Thr-2 is modified (N-acetylthreonine). Thr-2 carries the phosphothreonine modification. 3 consecutive transmembrane segments (helical) span residues 29 to 46, 118 to 133, and 142 to 156; these read YIGW…TAIS, HFLL…EWEL, and WIAV…AATA. His-118 serves as a coordination point for chlorophyll a. Tyr-126 provides a ligand contact to pheophytin a. Residues Asp-170 and Glu-189 each coordinate [CaMn4O5] cluster. Residues 197–218 form a helical membrane-spanning segment; that stretch reads FHMLGVAGVFGGSLFSAMHGSL. His-198 provides a ligand contact to chlorophyll a. Residues His-215 and 264–265 contribute to the a quinone site; that span reads SF. His-215 provides a ligand contact to Fe cation. A Fe cation-binding site is contributed by His-272. The chain crosses the membrane as a helical span at residues 274 to 288; it reads FLAVWPVVGIWFTAM. 4 residues coordinate [CaMn4O5] cluster: His-332, Glu-333, Asp-342, and Ala-344. Positions 345–353 are excised as a propeptide; sequence SVEAPAVNG.

It belongs to the reaction center PufL/M/PsbA/D family. As to quaternary structure, PSII is composed of 1 copy each of membrane proteins PsbA, PsbB, PsbC, PsbD, PsbE, PsbF, PsbH, PsbI, PsbJ, PsbK, PsbL, PsbM, PsbT, PsbX, PsbY, PsbZ, Psb30/Ycf12, at least 3 peripheral proteins of the oxygen-evolving complex and a large number of cofactors. It forms dimeric complexes. The D1/D2 heterodimer binds P680, chlorophylls that are the primary electron donor of PSII, and subsequent electron acceptors. It shares a non-heme iron and each subunit binds pheophytin, quinone, additional chlorophylls, carotenoids and lipids. D1 provides most of the ligands for the Mn4-Ca-O5 cluster of the oxygen-evolving complex (OEC). There is also a Cl(-1) ion associated with D1 and D2, which is required for oxygen evolution. The PSII complex binds additional chlorophylls, carotenoids and specific lipids. is required as a cofactor. In terms of processing, tyr-161 forms a radical intermediate that is referred to as redox-active TyrZ, YZ or Y-Z. Post-translationally, C-terminally processed by CTPA; processing is essential to allow assembly of the oxygen-evolving complex and thus photosynthetic growth.

It localises to the plastid. Its subcellular location is the chloroplast thylakoid membrane. The catalysed reaction is 2 a plastoquinone + 4 hnu + 2 H2O = 2 a plastoquinol + O2. Its function is as follows. Photosystem II (PSII) is a light-driven water:plastoquinone oxidoreductase that uses light energy to abstract electrons from H(2)O, generating O(2) and a proton gradient subsequently used for ATP formation. It consists of a core antenna complex that captures photons, and an electron transfer chain that converts photonic excitation into a charge separation. The D1/D2 (PsbA/PsbD) reaction center heterodimer binds P680, the primary electron donor of PSII as well as several subsequent electron acceptors. The sequence is that of Photosystem II protein D1 from Mesostigma viride (Green alga).